A 556-amino-acid polypeptide reads, in one-letter code: Formate--tetrahydrofolate ligase (556 aa).

Residue 65–72 (TPAGEGKS) participates in ATP binding.

This sequence belongs to the formate--tetrahydrofolate ligase family.

It carries out the reaction (6S)-5,6,7,8-tetrahydrofolate + formate + ATP = (6R)-10-formyltetrahydrofolate + ADP + phosphate. The protein operates within one-carbon metabolism; tetrahydrofolate interconversion. In Streptococcus equi subsp. zooepidemicus (strain MGCS10565), this protein is Formate--tetrahydrofolate ligase.